Consider the following 471-residue polypeptide: MSQEMGELTQTRLQKIWIPHNNGNSRLQRRRGSSIPQFTNSPTMVIMVGLPARGKTYISTKLTRYLNWIGTPTKVFNLGQYRREAVSYKNYEFFLPDNMEALLIRKQCALAALKDVHSYLSHEEGRVAVFDATNTTRERRSLILQFAKEHGYKVFFIESICNDPDVIAENIRQVKLGSPDYIDCDREKVLEDFLKRIECYEVNYQPLDDELDSHLSYIKIFDVGTRYMVNRVQDHIQSRTVYYLMNIHVTPRSIYLCRHGESELNLRGRIGGDSGLSARGKQYAYALANFIQSQGISSLKVGTSHMKRTIQTAEALGLPYEQWKALNEIDAGVCEEMTYEEIQEHYPEEFALRDQDKYRYRYPKGESYEDLVQRLEPVIMELERQENVLVICHQAVMRCLLAYFLDKSSDELPYLKCPLHTVLKLTPVAYGCKVESIYLNVEAVNTHREKPENVDITREPEEALDTVPAHY.

Position 2 is an N-acetylserine (S2). The tract at residues 2-250 (SQEMGELTQT…VYYLMNIHVT (249 aa)) is 6-phosphofructo-2-kinase. Residue S33 is modified to Phosphoserine; by PKA. ATP is bound at residue 49 to 57 (GLPARGKTY). Beta-D-fructose 6-phosphate contacts are provided by R82 and R105. D131 is an active-site residue. Positions 133 and 139 each coordinate beta-D-fructose 6-phosphate. A Phosphoserine modification is found at S141. C161 is an active-site residue. ATP is bound at residue 170 to 175 (NIRQVK). The beta-D-fructose 6-phosphate site is built by K175, R196, and Y200. The segment at 251 to 471 (PRSIYLCRHG…EALDTVPAHY (221 aa)) is fructose-2,6-bisphosphatase. R258 is a beta-D-fructose 2,6-bisphosphate binding site. Residue H259 is the Tele-phosphohistidine intermediate of the active site. Residues N265, G271, and R308 each contribute to the beta-D-fructose 2,6-bisphosphate site. E328 acts as the Proton donor/acceptor in catalysis. Beta-D-fructose 2,6-bisphosphate contacts are provided by Y339, R353, K357, Y368, Q394, and R398. Residue 350 to 353 (FALR) coordinates ATP. Residues 394–398 (QAVMR) and Y430 each bind ATP.

It in the C-terminal section; belongs to the phosphoglycerate mutase family. In terms of assembly, homodimer. As to expression, liver.

The catalysed reaction is beta-D-fructose 2,6-bisphosphate + H2O = beta-D-fructose 6-phosphate + phosphate. It catalyses the reaction beta-D-fructose 6-phosphate + ATP = beta-D-fructose 2,6-bisphosphate + ADP + H(+). With respect to regulation, phosphorylation at Ser-33 inhibits the kinase and activates the bisphosphatase. Functionally, synthesis and degradation of fructose 2,6-bisphosphate. The chain is 6-phosphofructo-2-kinase/fructose-2,6-bisphosphatase 1 from Bos taurus (Bovine).